The primary structure comprises 225 residues: Nucleolar protein 6 (225 aa).

Positions 1–75 are disordered; sequence MGSEEDKKLT…GGKGKNGKKG (75 aa). Residues 9-20 are compositionally biased toward basic residues; it reads LTKKQLKAQQFR. A compositionally biased stretch (basic and acidic residues) spans 21 to 42; sequence KSKEEKDQEKDVKKEQAPEGKR. A Phosphoserine modification is found at serine 45. Positions 56-75 are enriched in basic residues; the sequence is KKKRKTRRGRGGKGKNGKKG. The RRM domain maps to 78–155; the sequence is FIVFVGSLPR…KKINVELTVG (78 aa). The residue at position 160 (serine 160) is a Phosphoserine. Positions 187–225 are disordered; the sequence is NDGNQKKIAKTTATAAQTSGTDNKPVPAGIHPDRAKLLK.

Belongs to the RRM NOP6 family.

It localises to the nucleus. It is found in the nucleolus. Functionally, predicted to be involved in rRNA processing. This chain is Nucleolar protein 6 (NOP6), found in Saccharomyces cerevisiae (strain ATCC 204508 / S288c) (Baker's yeast).